We begin with the raw amino-acid sequence, 320 residues long: Eukaryotic translation initiation factor 3 subunit G (320 aa).

The disordered stretch occupies residues methionine 1–valine 59. Phosphoserine is present on residues serine 8 and serine 11. 2 positions are modified to phosphothreonine: threonine 38 and threonine 41. Serine 42, serine 189, serine 223, and serine 264 each carry phosphoserine. The disordered stretch occupies residues lysine 209–arginine 234. A compositionally biased stretch (basic and acidic residues) spans glycine 221–arginine 234. Residues alanine 239 to proline 317 form the RRM domain.

In terms of assembly, component of the eukaryotic translation initiation factor 3 (eIF-3) complex, which is composed of 13 subunits: EIF3A, EIF3B, EIF3C, EIF3D, EIF3E, EIF3F, EIF3G, EIF3H, EIF3I, EIF3J, EIF3K, EIF3L and EIF3M. The eIF-3 complex appears to include 3 stable modules: module A is composed of EIF3A, EIF3B, EIF3G and EIF3I; module B is composed of EIF3F, EIF3H, and EIF3M; and module C is composed of EIF3C, EIF3D, EIF3E, EIF3K and EIF3L. EIF3C of module C binds EIF3B of module A and EIF3H of module B, thereby linking the three modules. EIF3J is a labile subunit that binds to the eIF-3 complex via EIF3B. The eIF-3 complex interacts with RPS6KB1 under conditions of nutrient depletion. Mitogenic stimulation leads to binding and activation of a complex composed of MTOR and RPTOR, leading to phosphorylation and release of RPS6KB1 and binding of EIF4B to eIF-3. Interacts (via C-terminus) with AIFM1 (via N-terminus). Interacts with DHX33; the interaction is independent of RNA. In terms of processing, phosphorylated. Phosphorylation is enhanced upon serum stimulation.

The protein localises to the cytoplasm. It is found in the nucleus. The protein resides in the perinuclear region. Functionally, RNA-binding component of the eukaryotic translation initiation factor 3 (eIF-3) complex, which is required for several steps in the initiation of protein synthesis. The eIF-3 complex associates with the 40S ribosome and facilitates the recruitment of eIF-1, eIF-1A, eIF-2:GTP:methionyl-tRNAi and eIF-5 to form the 43S pre-initiation complex (43S PIC). The eIF-3 complex stimulates mRNA recruitment to the 43S PIC and scanning of the mRNA for AUG recognition. The eIF-3 complex is also required for disassembly and recycling of post-termination ribosomal complexes and subsequently prevents premature joining of the 40S and 60S ribosomal subunits prior to initiation. The eIF-3 complex specifically targets and initiates translation of a subset of mRNAs involved in cell proliferation, including cell cycling, differentiation and apoptosis, and uses different modes of RNA stem-loop binding to exert either translational activation or repression. This subunit can bind 18S rRNA. Its function is as follows. (Microbial infection) In case of FCV infection, plays a role in the ribosomal termination-reinitiation event leading to the translation of VP2. The protein is Eukaryotic translation initiation factor 3 subunit G of Homo sapiens (Human).